Reading from the N-terminus, the 202-residue chain is Na(+)-translocating NADH-quinone reductase subunit E (202 aa).

A run of 6 helical transmembrane segments spans residues 4–24, 35–55, 81–101, 114–134, 144–164, and 180–200; these read LAGL…FFLG, IEVA…TVPI, FLGL…LEMF, GIYL…LFMV, LVYG…LAGV, and LGIT…FSGI.

The protein belongs to the NqrDE/RnfAE family. Composed of six subunits; NqrA, NqrB, NqrC, NqrD, NqrE and NqrF.

Its subcellular location is the cell inner membrane. It catalyses the reaction a ubiquinone + n Na(+)(in) + NADH + H(+) = a ubiquinol + n Na(+)(out) + NAD(+). Functionally, NQR complex catalyzes the reduction of ubiquinone-1 to ubiquinol by two successive reactions, coupled with the transport of Na(+) ions from the cytoplasm to the periplasm. NqrA to NqrE are probably involved in the second step, the conversion of ubisemiquinone to ubiquinol. This chain is Na(+)-translocating NADH-quinone reductase subunit E, found in Nitrosomonas europaea (strain ATCC 19718 / CIP 103999 / KCTC 2705 / NBRC 14298).